We begin with the raw amino-acid sequence, 153 residues long: MAARRKARKRALDLLYEADQKAVSGGAPASGDAVALLAERIATPHGEAPMREYTVEIVEGVAAHQARIDELLETYAQGWSLERMPAVDRAILRIGVWELLFNDDVPDAVAVDEAVALAAELSTDDSPTFVNGLLGQLLRLAPVLRDEEAAAGG.

This sequence belongs to the NusB family.

Involved in transcription antitermination. Required for transcription of ribosomal RNA (rRNA) genes. Binds specifically to the boxA antiterminator sequence of the ribosomal RNA (rrn) operons. The polypeptide is Transcription antitermination protein NusB (Beutenbergia cavernae (strain ATCC BAA-8 / DSM 12333 / CCUG 43141 / JCM 11478 / NBRC 16432 / NCIMB 13614 / HKI 0122)).